The sequence spans 351 residues: Uroporphyrinogen decarboxylase (351 aa).

Residues 25–29 (RQAGR), Asp-74, Tyr-151, Ser-206, and His-325 each bind substrate.

It belongs to the uroporphyrinogen decarboxylase family. As to quaternary structure, homodimer.

The protein localises to the cytoplasm. The catalysed reaction is uroporphyrinogen III + 4 H(+) = coproporphyrinogen III + 4 CO2. Its pathway is porphyrin-containing compound metabolism; protoporphyrin-IX biosynthesis; coproporphyrinogen-III from 5-aminolevulinate: step 4/4. In terms of biological role, catalyzes the decarboxylation of four acetate groups of uroporphyrinogen-III to yield coproporphyrinogen-III. In Chlorobaculum parvum (strain DSM 263 / NCIMB 8327) (Chlorobium vibrioforme subsp. thiosulfatophilum), this protein is Uroporphyrinogen decarboxylase.